A 327-amino-acid polypeptide reads, in one-letter code: Ran-specific GTPase-activating protein 2 (327 aa).

2 disordered regions span residues 1–96 and 109–205; these read MSET…KKED and GFGV…KQEV. The span at 24–83 shows a compositional bias: basic and acidic residues; the sequence is PIDKLDGTPKRPREKDQDEQAEETSDKSEAPNKNDEEKKEEGKKDQEPSHKKIKVDDGKT. A Phosphothreonine modification is found at threonine 31. The span at 122–133 shows a compositional bias: polar residues; the sequence is ATTSTESLPASD. A compositionally biased stretch (low complexity) spans 140 to 152; the sequence is FAFGSGLSFGSGF. Basic and acidic residues-rich tracts occupy residues 157–179 and 189–205; these read NKTENNSESEKKATDVDKDKVHS and EDTKDKPKPLKLQKQEV. At serine 179 the chain carries Phosphoserine. The RanBD1 domain maps to 191–327; that stretch reads TKDKPKPLKL…YNIIVKSVPK (137 aa).

Interacts with GSP1, XPO1 and SRM1.

It localises to the nucleus. Important for the export of protein containing nuclear export signal (NES) out of the nucleus. Stimulates the GTPase activity of GSP1. The chain is Ran-specific GTPase-activating protein 2 (YRB2) from Saccharomyces cerevisiae (strain ATCC 204508 / S288c) (Baker's yeast).